The following is a 475-amino-acid chain: Bystin (475 aa).

Basic residues-rich tracts occupy residues 1-12 (MGKDVKKVHKLR) and 29-41 (KPHK…RKKK). 2 disordered regions span residues 1–57 (MGKD…ESVI) and 106–149 (DFID…QFGV). Composition is skewed to acidic residues over residues 45 to 54 (ENDTGIDETE) and 107 to 119 (FIDD…DADQ).

Belongs to the bystin family.

It localises to the nucleus. The protein localises to the nucleolus. Functionally, required for processing of 20S pre-rRNA precursor and biogenesis of 40S ribosomal subunits. The sequence is that of Bystin (bysl) from Dictyostelium discoideum (Social amoeba).